Consider the following 175-residue polypeptide: 3-hydroxydecanoyl-[acyl-carrier-protein] dehydratase (175 aa).

H71 is a catalytic residue.

It belongs to the thioester dehydratase family. FabA subfamily. Homodimer.

It localises to the cytoplasm. It carries out the reaction a (3R)-hydroxyacyl-[ACP] = a (2E)-enoyl-[ACP] + H2O. The enzyme catalyses (3R)-hydroxydecanoyl-[ACP] = (2E)-decenoyl-[ACP] + H2O. The catalysed reaction is (2E)-decenoyl-[ACP] = (3Z)-decenoyl-[ACP]. It functions in the pathway lipid metabolism; fatty acid biosynthesis. Its function is as follows. Necessary for the introduction of cis unsaturation into fatty acids. Catalyzes the dehydration of (3R)-3-hydroxydecanoyl-ACP to E-(2)-decenoyl-ACP and then its isomerization to Z-(3)-decenoyl-ACP. Can catalyze the dehydratase reaction for beta-hydroxyacyl-ACPs with saturated chain lengths up to 16:0, being most active on intermediate chain length. The protein is 3-hydroxydecanoyl-[acyl-carrier-protein] dehydratase of Rhodopseudomonas palustris (strain ATCC BAA-98 / CGA009).